A 34-amino-acid polypeptide reads, in one-letter code: Photosystem II reaction center protein Psb30 (34 aa).

A helical transmembrane segment spans residues 7–27 (VAQLISLFLILTSGPAIIVLI).

It belongs to the Psb30/Ycf12 family. In terms of assembly, PSII is composed of 1 copy each of membrane proteins PsbA, PsbB, PsbC, PsbD, PsbE, PsbF, PsbH, PsbI, PsbJ, PsbK, PsbL, PsbM, PsbT, PsbX, PsbY, PsbZ, Psb30/Ycf12, peripheral proteins of the oxygen-evolving complex and a large number of cofactors. It forms dimeric complexes.

The protein resides in the plastid. The protein localises to the chloroplast thylakoid membrane. Functionally, a core subunit of photosystem II (PSII), probably helps stabilize the reaction center. This chain is Photosystem II reaction center protein Psb30, found in Rhodomonas salina (Cryptomonas salina).